Here is a 579-residue protein sequence, read N- to C-terminus: Thiol:disulfide interchange protein DsbD (579 aa).

The N-terminal stretch at 1–16 (MKKLFLFFTLIFTAFA) is a signal peptide. 2 disulfides stabilise this stretch: Cys-124-Cys-129 and Cys-193-Cys-315. The next 8 membrane-spanning stretches (helical) occupy residues 178-198 (IFGF…LPML), 230-250 (LTYT…QIAL), 254-274 (YVMI…FGLF), 296-316 (GAFG…SPCT), 337-357 (AVTL…ITLF), 376-396 (FGFV…PEVW), 397-417 (ESRL…LQMS), and 420-440 (GFGY…VQPL). In terms of domain architecture, Thioredoxin spans 449–579 (TTTQSAVENM…AFSNWIEKLL (131 aa)). An intrachain disulfide couples Cys-495 to Cys-498.

Belongs to the thioredoxin family. DsbD subfamily.

It is found in the cell inner membrane. The catalysed reaction is [protein]-dithiol + NAD(+) = [protein]-disulfide + NADH + H(+). It catalyses the reaction [protein]-dithiol + NADP(+) = [protein]-disulfide + NADPH + H(+). Required to facilitate the formation of correct disulfide bonds in some periplasmic proteins and for the assembly of the periplasmic c-type cytochromes. Acts by transferring electrons from cytoplasmic thioredoxin to the periplasm. This transfer involves a cascade of disulfide bond formation and reduction steps. The polypeptide is Thiol:disulfide interchange protein DsbD (Haemophilus influenzae (strain PittGG)).